The chain runs to 112 residues: Large ribosomal subunit protein uL22 (112 aa).

Belongs to the universal ribosomal protein uL22 family. In terms of assembly, part of the 50S ribosomal subunit.

In terms of biological role, this protein binds specifically to 23S rRNA; its binding is stimulated by other ribosomal proteins, e.g. L4, L17, and L20. It is important during the early stages of 50S assembly. It makes multiple contacts with different domains of the 23S rRNA in the assembled 50S subunit and ribosome. Its function is as follows. The globular domain of the protein is located near the polypeptide exit tunnel on the outside of the subunit, while an extended beta-hairpin is found that lines the wall of the exit tunnel in the center of the 70S ribosome. This Nitratidesulfovibrio vulgaris (strain DSM 19637 / Miyazaki F) (Desulfovibrio vulgaris) protein is Large ribosomal subunit protein uL22.